The sequence spans 455 residues: Argininosuccinate lyase (455 aa).

The protein belongs to the lyase 1 family. Argininosuccinate lyase subfamily.

The protein localises to the cytoplasm. The catalysed reaction is 2-(N(omega)-L-arginino)succinate = fumarate + L-arginine. The protein operates within amino-acid biosynthesis; L-arginine biosynthesis; L-arginine from L-ornithine and carbamoyl phosphate: step 3/3. The protein is Argininosuccinate lyase of Shewanella baltica (strain OS155 / ATCC BAA-1091).